A 451-amino-acid chain; its full sequence is MRQAIMSYQNLVSEAGLTQKHLIYGDKELFQHELKTIFARNWLFLTHDSLIPSPGDYVKAKMGVDEVIVSRQNDGSVRAFLNVCRHRGKTIVDAEAGNAKGFVCGYHGWGYGSNGELQSVPFEKELYGDAIKKKCLGLKEVPRIESFHGFIYGCFDAEAPPLIDYLGDVAWYLEPTFKHSGGLELVGPPAKVVVKGNWKVFAENFVGDIYHIGWTHASILRAGQAIFAPLAGNAMLPPEGTGLQATTKYGSGIGVSLDAYSGVQSADLVPEMMAFGGAKQEKLAKEIGDVRARIYRSQVNGTVFPNNCFLTGAGVFKVFNPIDENTTEAWTYAIVEKDMPEDLKRRLADAAQRSTGPAGYWESDDNDNMVLSQNAKKYQSSNSDLIADLGFGKDVYGDECYPGVVSKSAFSETNHRGFYRAYQAHISSSNWAEFENTSRNWHTELTKTTDR.

In terms of domain architecture, Rieske spans 42–126; it reads WLFLTHDSLI…LQSVPFEKEL (85 aa). The [2Fe-2S] cluster site is built by Cys-84, His-86, Cys-104, and His-107. Positions 211, 216, and 365 each coordinate Fe cation.

This sequence belongs to the bacterial ring-hydroxylating dioxygenase alpha subunit family. The 2,4-dinitrotoluene dioxygenase (DNTDO) multicomponent enzyme system is composed of an electron transfer component and a dioxygenase component (iron sulfur protein (ISP)). The electron transfer component is composed of a ferredoxin reductase (DntAa) and a ferredoxin (DntAb), and the dioxygenase component is formed of a large alpha subunit (DntAc) and a small beta subunit (DntAd). [2Fe-2S] cluster is required as a cofactor. It depends on Fe(2+) as a cofactor.

It catalyses the reaction 2,4-dinitrotoluene + NADH + O2 = 4-methyl-5-nitrocatechol + nitrite + NAD(+). Component of the 2,4-dinitrotoluene dioxygenase (DNTDO) multicomponent enzyme system which catalyzes the incorporation of both atoms of molecular oxygen into 2,4-dinitrotoluene (DNT) to form 4-methyl-5-nitrocatechol (MNC) and nitrite. The alpha subunit has a catalytic role in the holoenzyme. Also able to convert naphthalene to cis-(1R,2S)-dihydroxy-1,2-dihydronaphthalene. The protein is 2,4-dinitrotoluene dioxygenase system, large oxygenase component of Burkholderia sp. (strain RASC).